Consider the following 467-residue polypeptide: Cytochrome c-552 (467 aa).

The N-terminal stretch at 1 to 27 (MMKKMTGKSFALSALVAASFMAAGAMA) is a signal peptide. Residue histidine 87 participates in heme c binding. Residues cysteine 115, cysteine 118, and lysine 119 each contribute to the heme site. 6 residues coordinate heme c: cysteine 153, cysteine 156, histidine 157, cysteine 195, cysteine 198, and histidine 199. Glutamate 201, tyrosine 202, lysine 250, and glutamine 252 together coordinate Ca(2+). Residue tyrosine 202 coordinates substrate. Histidine 253 is a substrate binding site. Residues histidine 264, cysteine 271, cysteine 274, histidine 275, histidine 290, cysteine 303, cysteine 306, histidine 307, and histidine 382 each contribute to the heme c site.

It belongs to the cytochrome c-552 family. Ca(2+) is required as a cofactor. It depends on heme c as a cofactor.

Its subcellular location is the periplasm. The catalysed reaction is 6 Fe(III)-[cytochrome c] + NH4(+) + 2 H2O = 6 Fe(II)-[cytochrome c] + nitrite + 8 H(+). It functions in the pathway nitrogen metabolism; nitrate reduction (assimilation). Catalyzes the reduction of nitrite to ammonia, consuming six electrons in the process. This chain is Cytochrome c-552, found in Shewanella sp. (strain W3-18-1).